Here is a 249-residue protein sequence, read N- to C-terminus: Chitooligosaccharide deacetylase (249 aa).

Residues His61 and His125 each contribute to the Mg(2+) site.

It belongs to the YdjC deacetylase family. ChbG subfamily. In terms of assembly, homodimer. Mg(2+) serves as cofactor.

It is found in the cytoplasm. The enzyme catalyses N,N'-diacetylchitobiose + H2O = N-acetyl-beta-D-glucosaminyl-(1-&gt;4)-D-glucosamine + acetate. The catalysed reaction is diacetylchitobiose-6'-phosphate + H2O = N'-monoacetylchitobiose-6'-phosphate + acetate. Its pathway is glycan degradation; chitin degradation. In terms of biological role, involved in the degradation of chitin. ChbG is essential for growth on the acetylated chitooligosaccharides chitobiose and chitotriose but is dispensable for growth on cellobiose and chitosan dimer, the deacetylated form of chitobiose. Deacetylation of chitobiose-6-P and chitotriose-6-P is necessary for both the activation of the chb promoter by the regulatory protein ChbR and the hydrolysis of phosphorylated beta-glucosides by the phospho-beta-glucosidase ChbF. Catalyzes the removal of only one acetyl group from chitobiose-6-P to yield monoacetylchitobiose-6-P, the inducer of ChbR and the substrate of ChbF. This chain is Chitooligosaccharide deacetylase, found in Escherichia coli O7:K1 (strain IAI39 / ExPEC).